The primary structure comprises 392 residues: MRDLKTELEQRRAKGLYRSRRVLEGRQTPEQVVDGRQVIAFCSNDYLGLASHPKVIAALRKGASEYGAGAGAAHLVNGHTRAHHQLEEELAAFTNRERALLFSTGYMANLGVAQALLGRSDHVLEDRLNHASLIDAGLLSGARFQRYRHATAVDLAQRLAGLGQTGERLVLTDGVFSMDGNLAPLPELASICTAHQAWLLVDDAHGLGVLGETGAGSLEHFGLSQQQVPILMGTLGKAFGTAGAFVAGSEALIETLIQSARTYVYTTAMPAAMAEATRAALRIVQAEGKRREKLRSLVARFRAGAGQLGVRLMDSQTPIQPLVIGDAVEALRLSERLLEQDLLVPAIRPPTVPEGTARLRVTLSAAHTEAQVDRLLEALDRSMRGSEDVGSR.

R18 serves as a coordination point for substrate. A pyridoxal 5'-phosphate-binding site is contributed by 105 to 106 (GY). Position 130 (H130) interacts with substrate. Pyridoxal 5'-phosphate-binding residues include S177, H205, and T234. An N6-(pyridoxal phosphate)lysine modification is found at K237. Position 351 (T351) interacts with substrate.

The protein belongs to the class-II pyridoxal-phosphate-dependent aminotransferase family. BioF subfamily. Homodimer. It depends on pyridoxal 5'-phosphate as a cofactor.

It catalyses the reaction 6-carboxyhexanoyl-[ACP] + L-alanine + H(+) = (8S)-8-amino-7-oxononanoate + holo-[ACP] + CO2. It participates in cofactor biosynthesis; biotin biosynthesis. In terms of biological role, catalyzes the decarboxylative condensation of pimeloyl-[acyl-carrier protein] and L-alanine to produce 8-amino-7-oxononanoate (AON), [acyl-carrier protein], and carbon dioxide. The chain is 8-amino-7-oxononanoate synthase from Thioalkalivibrio sulfidiphilus (strain HL-EbGR7).